We begin with the raw amino-acid sequence, 427 residues long: Enolase (427 aa).

Position 163 (Gln-163) interacts with (2R)-2-phosphoglycerate. Glu-205 functions as the Proton donor in the catalytic mechanism. The Mg(2+) site is built by Asp-242, Glu-283, and Asp-310. The (2R)-2-phosphoglycerate site is built by Lys-335, Arg-364, Ser-365, and Lys-386. Lys-335 serves as the catalytic Proton acceptor.

The protein belongs to the enolase family. Requires Mg(2+) as cofactor.

The protein resides in the cytoplasm. The protein localises to the secreted. It localises to the cell surface. It catalyses the reaction (2R)-2-phosphoglycerate = phosphoenolpyruvate + H2O. It functions in the pathway carbohydrate degradation; glycolysis; pyruvate from D-glyceraldehyde 3-phosphate: step 4/5. Functionally, catalyzes the reversible conversion of 2-phosphoglycerate (2-PG) into phosphoenolpyruvate (PEP). It is essential for the degradation of carbohydrates via glycolysis. This chain is Enolase, found in Salinispora tropica (strain ATCC BAA-916 / DSM 44818 / JCM 13857 / NBRC 105044 / CNB-440).